We begin with the raw amino-acid sequence, 648 residues long: RAF proto-oncogene serine/threonine-protein kinase (648 aa).

S29 is modified (phosphoserine; by MAPK1). Position 43 is a phosphoserine; by PKA and MAPK1 (S43). Residues 56–131 enclose the RBD domain; the sequence is NTIRVFLPNK…IGEELQVDFL (76 aa). The Phorbol-ester/DAG-type zinc-finger motif lies at 138–184; sequence THNFARKTFLKLAFCDICQKFLLNGFRCQTCGYKFHEHCSTKVPTMC. Residues H139, C152, C155, C165, C168, H173, C176, and C184 each coordinate Zn(2+). Positions 220–334 are disordered; it reads SVSRMPVSSQ…QEKNKIRPRG (115 aa). The segment covering 239–271 has biased composition (polar residues); sequence TFNTSSPSSEGSLSQRQRSTSTPNVHMVSTTLP. The residue at position 252 (S252) is a Phosphoserine. S259 carries the phosphoserine; by PKA, PKC and PKB/AKT1 modification. T268 is subject to Phosphothreonine; by autocatalysis. Position 269 is a phosphothreonine; by PKA (T269). Residues 275–285 are compositionally biased toward basic and acidic residues; the sequence is RMIEDAIRSHS. Positions 286–301 are enriched in low complexity; the sequence is ESASPSALSSSPNNLS. The residue at position 289 (S289) is a Phosphoserine; by MAPK1. S296 bears the Phosphoserine mark. S301 carries the phosphoserine; by MAPK1 modification. An interaction with PEBP1/RKIP region spans residues 331 to 349; that stretch reads RPRGQRDSSYYWEIEASEV. At S338 the chain carries Phosphoserine; by PAK1, PAK2, PAK3 and PAK5. S339 bears the Phosphoserine; by PAK1, PAK2 and PAK3 mark. Residues Y340 and Y341 each carry the phosphotyrosine; by SRC modification. The Protein kinase domain maps to 349 to 609; it reads VMLSTRIGSG…PQILSSIELL (261 aa). ATP-binding positions include 355 to 363 and K375; that span reads IGSGSFGTV. The active-site Proton acceptor is D468. S471 is modified (phosphoserine). T491 carries the phosphothreonine modification. S494 bears the Phosphoserine mark. Position 499 is a phosphoserine; by PKC (S499). Residue R563 is modified to Symmetric dimethylarginine; by PRMT5. Phosphoserine is present on S621. S642 carries the phosphoserine; by MAPK1 modification.

Belongs to the protein kinase superfamily. TKL Ser/Thr protein kinase family. RAF subfamily. In terms of assembly, monomer. Homodimer. Heterodimerizes with BRAF and this heterodimer possesses a highly increased kinase activity compared to the respective homodimers or monomers. Heterodimerization is mitogen-regulated and enhanced by 14-3-3 proteins. MAPK1/ERK2 activation can induce a negative feedback that promotes the dissociation of the heterodimer. Forms a multiprotein complex with Ras (M-Ras/MRAS), SHOC2 and protein phosphatase 1 (PPP1CA, PPP1CB and PPP1CC). Interacts with LZTR1. Interacts with Ras proteins; the interaction is antagonized by RIN1. Weakly interacts with RIT1. Interacts (via N-terminus) with RGS14 (via RBD domains); the interaction mediates the formation of a ternary complex with BRAF, a ternary complex inhibited by GNAI1. Probably forms a complex composed of chaperones HSP90 and HSP70, co-chaperones CDC37, PPP5C, TSC1 and client protein TSC2, CDK4, AKT, RAF1 and NR3C1; this complex does not contain co-chaperones STIP1/HOP and PTGES3/p23. Interacts with STK3/MST2; the interaction inhibits its pro-apoptotic activity. Interacts (when phosphorylated at Ser-259) with YWHAZ (unphosphorylated at 'Thr-232'). Interacts with MAP2K1/MEK1 and MAP2K2/MEK2. Interacts with MAP3K5/ASF1 (via N-terminus) and this interaction inhibits the proapoptotic function of MAP3K5/ASK1. Interacts with PAK1 (via kinase domain). The phosphorylated form interacts with PIN1. The Ser-338 and Ser-339 phosphorylated form (by PAK1) interacts with BCL2. Interacts with PEBP1/RKIP and this interaction is enhanced if RAF1 is phosphorylated on residues Ser-338, Ser-339, Tyr-340 and Tyr-341. Interacts with ADCY2, ADCY5, ADCY6, DGKH, RCAN1/DSCR1, PPP1R12A, PKB/AKT1, PPP2CA, PPP2R1B, SPRY2, SPRY4, CNKSR1/CNK1, KSR2 and PHB/prohibitin. Interacts with ROCK2. In its active form, interacts with PRMT5. Interacts with FAM83B; displaces 14-3-3 proteins from RAF1 and activates RAF1. Interacts with PDE8A; the interaction promotes RAF1 activity. Interacts with MFHAS1. Interacts with GLS. Interacts with NEK10 and MAP2K1; the interaction is direct with NEK10 and required for ERK1/2-signaling pathway activation in response to UV irradiation. Zn(2+) serves as cofactor. In terms of processing, phosphorylation at Thr-269, Ser-338, Tyr-341, Thr-491 and Ser-494 results in its activation. Phosphorylation at Ser-29, Ser-43, Ser-289, Ser-296, Ser-301 and Ser-642 by MAPK1/ERK2 results in its inactivation. Phosphorylation at Ser-259 induces the interaction with YWHAZ and inactivates kinase activity. Dephosphorylation of Ser-259 by the SHOC2-MRAS-PP1c (SMP) complex consisting of SHOC2, GTP-bound M-Ras/MRAS and the catalytic subunit of protein phosphatase 1 (PPP1CA, PPP1CB or PPP1CC); this relieves inactivation and stimulates kinase activity. Phosphorylation at Ser-338 by PAK1 and PAK5 and Ser-339 by PAK1 is required for its mitochondrial localization. Phosphorylation at Ser-621 in response to growth factor treatment stabilizes the protein, possibly by preventing proteasomal degradation. Phosphorylation at Ser-289, Ser-296, Ser-301, Ser-338 and Ser-621 are somehow linked to the methylation potential of cells. Treatment of cells with HGF in the presence of the methylation inhibitor 5'-methylthioadenosine (MTA) results in increased phosphorylation at Ser-338 and Ser-621 and decreased phosphorylation at Ser-296, Ser-301 and Ser-338. Dephosphorylation at Ser-338 by PPP5C results in an activity decrease. Methylated at Arg-563 in response to EGF treatment. This modification leads to destabilization of the protein, possibly through proteasomal degradation. As to expression, in skeletal muscle, isoform 1 is more abundant than isoform 2.

The protein localises to the cytoplasm. The protein resides in the cell membrane. Its subcellular location is the mitochondrion. It is found in the nucleus. It catalyses the reaction L-seryl-[protein] + ATP = O-phospho-L-seryl-[protein] + ADP + H(+). It carries out the reaction L-threonyl-[protein] + ATP = O-phospho-L-threonyl-[protein] + ADP + H(+). Regulation is a highly complex process involving membrane recruitment, protein-protein interactions, dimerization, and phosphorylation/dephosphorylation events. Ras-GTP recruits RAF1 to the membrane, thereby promoting its activation. The inactive conformation of RAF1 is maintained by autoinhibitory interactions occurring between the N-terminal regulatory and the C-terminal catalytic domains and by the binding of a 14-3-3 protein that contacts two phosphorylation sites, Ser-259 and Ser-621. Upon mitogenic stimulation, Ras and PPP2R1A cooperate to release autoinhibition and the subsequent phosphorylation of activating sites: Ser-338, Tyr-341, Thr-491, and Ser-494, yields a fully active kinase. Through a negative feedback mechanism involving MAPK1/ERK2, RAF1 is phosphorylated on Ser-29, Ser-43, Ser-289, Ser-296, Ser-301 and Ser-642 by MAPK1/ERK2, which yields an inactive, desensitized kinase. The signaling-competent conformation of RAF1 is finally re-established by the coordinated action of PIN1, a prolyl isomerase that converts pSer and pThr residues from the cis to the trans conformation, which is preferentially recognized and dephosphorylated by PPP2R1A. Activated by homodimerization and heterodimerization (with BRAF). Also regulated through association with other proteins such as KSR2, CNKSR1/CNK1, PEBP1/RKIP, PHB/prohibitin and SPRY4. PEBP1/RKIP acts by dissociating RAF1 from its substrates MAP2K1/MEK1 and MAP2K2/MEK2. PHB/prohibitin facilitates the displacement of 14-3-3 from RAF1 by activated Ras, thereby promoting cell membrane localization and phosphorylation of RAF1 at the activating Ser-338. SPRY4 inhibits Ras-independent, but not Ras-dependent, activation of RAF1. CNKSR1/CNK1 regulates Src-mediated RAF1 activation. Its function is as follows. Serine/threonine-protein kinase that acts as a regulatory link between the membrane-associated Ras GTPases and the MAPK/ERK cascade, and this critical regulatory link functions as a switch determining cell fate decisions including proliferation, differentiation, apoptosis, survival and oncogenic transformation. RAF1 activation initiates a mitogen-activated protein kinase (MAPK) cascade that comprises a sequential phosphorylation of the dual-specific MAPK kinases (MAP2K1/MEK1 and MAP2K2/MEK2) and the extracellular signal-regulated kinases (MAPK3/ERK1 and MAPK1/ERK2). The phosphorylated form of RAF1 (on residues Ser-338 and Ser-339, by PAK1) phosphorylates BAD/Bcl2-antagonist of cell death at 'Ser-75'. Phosphorylates adenylyl cyclases: ADCY2, ADCY5 and ADCY6, resulting in their activation. Phosphorylates PPP1R12A resulting in inhibition of the phosphatase activity. Phosphorylates TNNT2/cardiac muscle troponin T. Can promote NF-kB activation and inhibit signal transducers involved in motility (ROCK2), apoptosis (MAP3K5/ASK1 and STK3/MST2), proliferation and angiogenesis (RB1). Can protect cells from apoptosis also by translocating to the mitochondria where it binds BCL2 and displaces BAD/Bcl2-antagonist of cell death. Regulates Rho signaling and migration, and is required for normal wound healing. Plays a role in the oncogenic transformation of epithelial cells via repression of the TJ protein, occludin (OCLN) by inducing the up-regulation of a transcriptional repressor SNAI2/SLUG, which induces down-regulation of OCLN. Restricts caspase activation in response to selected stimuli, notably Fas stimulation, pathogen-mediated macrophage apoptosis, and erythroid differentiation. This Homo sapiens (Human) protein is RAF proto-oncogene serine/threonine-protein kinase.